We begin with the raw amino-acid sequence, 1059 residues long: Ceruloplasmin (1059 aa).

The first 19 residues, 1 to 19 (MKFLLLSALLFLHSSLAWT), serve as a signal peptide directing secretion. Plastocyanin-like domains lie at 20-199 (REKH…LILC), 208-356 (KEEN…VRDC), 369-554 (HVRH…MKIC), 564-712 (RQKD…VNQC), 724-894 (GERT…LIVC), and 902-1055 (FNPK…PNQE). Positions 55, 64, and 67 each coordinate Na(+). Residues His120 and His122 each coordinate Cu(2+). His120 is a binding site for O2. Residue Lys128 participates in Ca(2+) binding. An N-linked (GlcNAc...) asparagine glycan is attached at Asn138. 3 residues coordinate Ca(2+): Gln143, Asp146, and Asp147. Cys173 and Cys199 are oxidised to a cystine. Cu(2+) is bound by residues His179 and His181. His179 is an O2 binding site. The N-linked (GlcNAc...) asparagine glycan is linked to Asn226. Ser255 is a binding site for Na(+). An intrachain disulfide couples Cys275 to Cys356. Cu(2+) contacts are provided by His294, Cys337, and His342. The N-linked (GlcNAc...) asparagine glycan is linked to Asn396. The Na(+) site is built by Phe407, Gly416, and Tyr419. Cysteines 528 and 554 form a disulfide. Asn582 is a glycosylation site (N-linked (GlcNAc...) asparagine). Ser611 lines the Na(+) pocket. An intrachain disulfide couples Cys631 to Cys712. The Cu(2+) site is built by His650, Cys693, His698, and Met703. Catalysis depends on Cys693, which acts as the Nucleophile; for glutathione peroxidase activity. Asn756 carries an N-linked (GlcNAc...) asparagine glycan. Na(+) contacts are provided by Phe761, Gly770, and Tyr773. A disulfide bridge links Cys868 with Cys894. A glycan (N-linked (GlcNAc...) asparagine) is linked at Asn920. Ser949 contributes to the Na(+) binding site. Cu(2+) is bound by residues His988, His991, His993, His1033, Cys1034, His1035, His1039, and Met1044. Residues His991 and His993 each coordinate O2. Position 1035 (His1035) interacts with O2.

This sequence belongs to the multicopper oxidase family. As to quaternary structure, found in a complex with MPO and LTF; interacts directly with MPO and LTF, which allows Fe(3+) incorporation into LTF, activation of CP ferroxidase activity and protection of CP antioxidant properties by MPO. Cu(2+) is required as a cofactor. Synthesized in liver and secreted into the plasma. Also choroid plexus, yolk sac, placenta, and testis; not in stomach and small intestine. Fetal lung and liver.

The protein localises to the secreted. The enzyme catalyses 4 Fe(2+) + O2 + 4 H(+) = 4 Fe(3+) + 2 H2O. The catalysed reaction is 4 Cu(+) + O2 + 4 H(+) = 4 Cu(2+) + 2 H2O. It carries out the reaction a hydroperoxide + 2 glutathione = an alcohol + glutathione disulfide + H2O. It catalyses the reaction 4 nitric oxide + O2 + 2 H2O = 4 nitrite + 4 H(+). The enzyme catalyses 2 glutathione + H2O2 = glutathione disulfide + 2 H2O. Its function is as follows. Multifunctional blue, copper-binding (6-7 atoms per molecule) glycoprotein. It has ferroxidase activity oxidizing Fe(2+) to Fe(3+) without releasing radical oxygen species. It is involved in iron transport across the cell membrane. Copper ions provide a large number of enzymatic activites. Oxidizes highly toxic ferrous ions to the ferric state for further incorporation onto apo-transferrins, catalyzes Cu(+) oxidation and promotes the oxidation of biogenic amines such as norepinephrin and serotonin. Provides Cu(2+) ions for the ascorbate-mediated deaminase degradation of the heparan sulfate chains of GPC1. Has glutathione peroxidase-like activity, can remove both hydrogen peroxide and lipid hydroperoxide in the presence of thiols. Also shows NO-oxidase and NO2 synthase activities that determine endocrine NO homeostasis. The sequence is that of Ceruloplasmin (Cp) from Rattus norvegicus (Rat).